Consider the following 285-residue polypeptide: Type II secretion system protein C (285 aa).

At 1–27 (MSKGIKMHNSVMRLTIPNKKIINYAPH) the chain is on the cytoplasmic side. The chain crosses the membrane as a helical span at residues 28–46 (IVTSIILFFICQQLAQLTW). Topologically, residues 47 to 285 (KIILPVNFTD…NDIYLALRDE (239 aa)) are periplasmic.

The protein belongs to the GSP C family.

The protein resides in the cell inner membrane. Its function is as follows. Involved in a type II secretion system (T2SS, formerly general secretion pathway, GSP) for the export of proteins. Required for the translocation of pullulanase. This Klebsiella pneumoniae protein is Type II secretion system protein C (pulC).